Here is a 238-residue protein sequence, read N- to C-terminus: Leucyl/phenylalanyl-tRNA--protein transferase (238 aa).

It belongs to the L/F-transferase family.

It localises to the cytoplasm. It catalyses the reaction N-terminal L-lysyl-[protein] + L-leucyl-tRNA(Leu) = N-terminal L-leucyl-L-lysyl-[protein] + tRNA(Leu) + H(+). It carries out the reaction N-terminal L-arginyl-[protein] + L-leucyl-tRNA(Leu) = N-terminal L-leucyl-L-arginyl-[protein] + tRNA(Leu) + H(+). The catalysed reaction is L-phenylalanyl-tRNA(Phe) + an N-terminal L-alpha-aminoacyl-[protein] = an N-terminal L-phenylalanyl-L-alpha-aminoacyl-[protein] + tRNA(Phe). In terms of biological role, functions in the N-end rule pathway of protein degradation where it conjugates Leu, Phe and, less efficiently, Met from aminoacyl-tRNAs to the N-termini of proteins containing an N-terminal arginine or lysine. The sequence is that of Leucyl/phenylalanyl-tRNA--protein transferase from Pseudoalteromonas translucida (strain TAC 125).